The chain runs to 32 residues: Cytochrome b6-f complex subunit 7 (32 aa).

Residues 9-27 form a helical membrane-spanning segment; it reads AAVFWVLIPVGLLGGAILL.

It belongs to the PetM family. As to quaternary structure, the 4 large subunits of the cytochrome b6-f complex are cytochrome b6, subunit IV (17 kDa polypeptide, PetD), cytochrome f and the Rieske protein, while the 4 small subunits are PetG, PetL, PetM and PetN. The complex functions as a dimer.

The protein resides in the cellular thylakoid membrane. Its function is as follows. Component of the cytochrome b6-f complex, which mediates electron transfer between photosystem II (PSII) and photosystem I (PSI), cyclic electron flow around PSI, and state transitions. The chain is Cytochrome b6-f complex subunit 7 from Prochlorococcus marinus (strain MIT 9211).